The primary structure comprises 170 residues: Acireductone dioxygenase (170 aa).

Fe(2+) is bound by residues histidine 99, histidine 101, glutamate 105, and histidine 144. 4 residues coordinate Ni(2+): histidine 99, histidine 101, glutamate 105, and histidine 144.

It belongs to the acireductone dioxygenase (ARD) family. Monomer. Fe(2+) is required as a cofactor. Requires Ni(2+) as cofactor.

It carries out the reaction 1,2-dihydroxy-5-(methylsulfanyl)pent-1-en-3-one + O2 = 3-(methylsulfanyl)propanoate + CO + formate + 2 H(+). The enzyme catalyses 1,2-dihydroxy-5-(methylsulfanyl)pent-1-en-3-one + O2 = 4-methylsulfanyl-2-oxobutanoate + formate + 2 H(+). The protein operates within amino-acid biosynthesis; L-methionine biosynthesis via salvage pathway; L-methionine from S-methyl-5-thio-alpha-D-ribose 1-phosphate: step 5/6. Its function is as follows. Catalyzes 2 different reactions between oxygen and the acireductone 1,2-dihydroxy-3-keto-5-methylthiopentene (DHK-MTPene) depending upon the metal bound in the active site. Fe-containing acireductone dioxygenase (Fe-ARD) produces formate and 2-keto-4-methylthiobutyrate (KMTB), the alpha-ketoacid precursor of methionine in the methionine recycle pathway. Ni-containing acireductone dioxygenase (Ni-ARD) produces methylthiopropionate, carbon monoxide and formate, and does not lie on the methionine recycle pathway. In Bacillus mycoides (strain KBAB4) (Bacillus weihenstephanensis), this protein is Acireductone dioxygenase.